The chain runs to 432 residues: PC-esterase domain-containing protein 1B (432 aa).

2 disordered regions span residues 264 to 293 (EWIK…LSPP) and 398 to 432 (RGFG…PRPQ).

It belongs to the PC-esterase family.

This chain is PC-esterase domain-containing protein 1B, found in Homo sapiens (Human).